A 160-amino-acid chain; its full sequence is Large ribosomal subunit protein bL19 (160 aa).

Belongs to the bacterial ribosomal protein bL19 family.

In terms of biological role, this protein is located at the 30S-50S ribosomal subunit interface and may play a role in the structure and function of the aminoacyl-tRNA binding site. In Prochlorococcus marinus subsp. pastoris (strain CCMP1986 / NIES-2087 / MED4), this protein is Large ribosomal subunit protein bL19.